The following is an 844-amino-acid chain: Protein translocase subunit SecA (844 aa).

Residues Gln-87, 105–109, and Asp-495 each bind ATP; that span reads GEGKT. Residues 783–800 show a composition bias toward basic and acidic residues; the sequence is QAPPEELKQEFKHKEEPK. The interval 783-844 is disordered; it reads QAPPEELKQE…GQKYKKCCGA (62 aa). The segment covering 802–811 has biased composition (polar residues); the sequence is LNYSGAQKET. The segment covering 816–826 has biased composition (basic and acidic residues); it reads PERRGEPKVGR. Zn(2+)-binding residues include Cys-830, Cys-832, Cys-841, and Cys-842.

It belongs to the SecA family. As to quaternary structure, monomer and homodimer. Part of the essential Sec protein translocation apparatus which comprises SecA, SecYEG and auxiliary proteins SecDF-YajC and YidC. Zn(2+) is required as a cofactor.

The protein resides in the cell inner membrane. The protein localises to the cytoplasm. The catalysed reaction is ATP + H2O + cellular proteinSide 1 = ADP + phosphate + cellular proteinSide 2.. Functionally, part of the Sec protein translocase complex. Interacts with the SecYEG preprotein conducting channel. Has a central role in coupling the hydrolysis of ATP to the transfer of proteins into and across the cell membrane, serving as an ATP-driven molecular motor driving the stepwise translocation of polypeptide chains across the membrane. This is Protein translocase subunit SecA from Nitratidesulfovibrio vulgaris (strain DSM 19637 / Miyazaki F) (Desulfovibrio vulgaris).